The chain runs to 173 residues: Co-chaperone protein HscB homolog (173 aa).

Positions 5–77 constitute a J domain; it reads CHFALFDLQP…SQRARYLLAL (73 aa).

This sequence belongs to the HscB family. In terms of assembly, interacts with HscA and stimulates its ATPase activity.

In terms of biological role, co-chaperone involved in the maturation of iron-sulfur cluster-containing proteins. Seems to help targeting proteins to be folded toward HscA. The polypeptide is Co-chaperone protein HscB homolog (Ectopseudomonas mendocina (strain ymp) (Pseudomonas mendocina)).